The chain runs to 102 residues: Small ribosomal subunit protein uS10 (102 aa).

This sequence belongs to the universal ribosomal protein uS10 family. Part of the 30S ribosomal subunit.

Its function is as follows. Involved in the binding of tRNA to the ribosomes. This is Small ribosomal subunit protein uS10 from Ligilactobacillus salivarius (strain UCC118) (Lactobacillus salivarius).